A 141-amino-acid polypeptide reads, in one-letter code: Nucleoside diphosphate kinase (141 aa).

Residues lysine 11, phenylalanine 59, arginine 87, threonine 93, arginine 104, and asparagine 114 each coordinate ATP. Residue histidine 117 is the Pros-phosphohistidine intermediate of the active site.

The protein belongs to the NDK family. As to quaternary structure, homotetramer. The cofactor is Mg(2+).

The protein resides in the cytoplasm. It catalyses the reaction a 2'-deoxyribonucleoside 5'-diphosphate + ATP = a 2'-deoxyribonucleoside 5'-triphosphate + ADP. The enzyme catalyses a ribonucleoside 5'-diphosphate + ATP = a ribonucleoside 5'-triphosphate + ADP. Its function is as follows. Major role in the synthesis of nucleoside triphosphates other than ATP. The ATP gamma phosphate is transferred to the NDP beta phosphate via a ping-pong mechanism, using a phosphorylated active-site intermediate. The protein is Nucleoside diphosphate kinase of Legionella pneumophila (strain Lens).